Consider the following 267-residue polypeptide: Translation initiation factor 2 subunit alpha (267 aa).

Residues Gly17–Lys88 enclose the S1 motif domain.

Belongs to the eIF-2-alpha family. As to quaternary structure, heterotrimer composed of an alpha, a beta and a gamma chain.

Functionally, eIF-2 functions in the early steps of protein synthesis by forming a ternary complex with GTP and initiator tRNA. The chain is Translation initiation factor 2 subunit alpha (eif2a) from Archaeoglobus fulgidus (strain ATCC 49558 / DSM 4304 / JCM 9628 / NBRC 100126 / VC-16).